A 161-amino-acid chain; its full sequence is Small ribosomal subunit protein uS19 (161 aa).

Residues 1–19 (MARQKKYSGKGGARKKNKQ) show a composition bias toward basic residues. Positions 1–26 (MARQKKYSGKGGARKKNKQKQSVAPR) are disordered.

Belongs to the universal ribosomal protein uS19 family.

Protein S19 forms a complex with S13 that binds strongly to the 16S ribosomal RNA. The chain is Small ribosomal subunit protein uS19 from Methanococcus maripaludis (strain C6 / ATCC BAA-1332).